The sequence spans 641 residues: Pumilio homolog 24 (641 aa).

Positions 1–82 (MSSKGLKPQK…LTEARKKKRK (82 aa)) are disordered. Positions 9–404 (QKSTKRKDTD…RPLLQLLHPN (396 aa)) constitute a PUM-HD domain. Composition is skewed to basic and acidic residues over residues 14–27 (RKDT…DSLK) and 67–76 (RVQAKELTEA). Pumilio repeat units follow at residues 118 to 153 (KMKG…VLFT), 154 to 189 (ELQP…ACIS), 190 to 225 (SLRG…ELLA), 303 to 340 (QLLT…KIIK), and 341 to 378 (AMKE…IIVR). The segment at 427-468 (MDKSETSSKTKDTDGNEIGEETKDEQEDTVAEHSDHEENVTA) is disordered. Residues 428–440 (DKSETSSKTKDTD) are compositionally biased toward basic and acidic residues. Over residues 441–455 (GNEIGEETKDEQEDT) the composition is skewed to acidic residues. A compositionally biased stretch (basic and acidic residues) spans 456 to 468 (VAEHSDHEENVTA).

Its subcellular location is the nucleus. The protein resides in the nucleolus. In terms of biological role, sequence-specific RNA-binding protein that regulates translation and mRNA stability by binding the 3'-UTR of target mRNAs. This is Pumilio homolog 24 (APUM24) from Arabidopsis thaliana (Mouse-ear cress).